The primary structure comprises 211 residues: Suppressor of cytokine signaling 1 (211 aa).

Positions M1–T53 are disordered. Residues P25–A35 show a composition bias toward low complexity. Positions P36 to A49 are enriched in pro residues. Residues F55 to R66 are kinase inhibitory region (KIR). An extended SH2 subdomain (ESS) region spans residues I67–G78. An SH2 domain is found at F79 to L174. One can recognise an SOCS box domain in the interval M161–Q210. An interaction with Elongin BC complex region spans residues P173–I182.

Belongs to the SOCS1 family. In terms of assembly, interacts with multiple activated signaling proteins of the tyrosine kinase signaling pathway including JAK family kinases, TEC, KIT, GRB2 and VAV. Binding to JAKs is mediated through the KIR and SH2 domains to a phosphorylated tyrosine residue within the JAK JH1 domain. Binds the SH3 domain of GRB2 via diproline determinants in the N-terminus, and the N-terminal regulatory domain of VAV. Interacts with the Elongin BC complex (ELOB and ELOC). Component of an ECS CBC(SOCS1) E3 ubiquitin-protein ligase complex which contains Elongin BC, CUL5, RBX1 and SOCS1. Interacts (via SH2 domain and SOCS box) with TRIM8. Interacts with AXL, CUL2 and FGFR3. Interacts with INSR. Interacts with TRIM8. Interacts with DCUN1D1. Interacts with IFNGR1. Expressed in all tissues with high expression in spleen, small intestine and peripheral blood leukocytes.

It localises to the nucleus. It is found in the cytoplasmic vesicle. The protein operates within protein modification; protein ubiquitination. In terms of biological role, essential negative regulator of type I and type II interferon (IFN) signaling, as well as that of other cytokines, including IL2, IL4, IL6 and leukemia inhibitory factor (LIF). Downregulates cytokine signaling by inhibiting the JAK/STAT signaling pathway. Acts by binding to JAK proteins and to IFNGR1 and inhibiting their kinase activity. In vitro, suppresses Tec protein-tyrosine activity. Regulates IFN-gamma (IFNG)-mediated sensory neuron survival. Probable substrate recognition component of an ECS (Elongin BC-CUL2/5-SOCS-box protein) E3 ubiquitin ligase complex which mediates the ubiquitination and subsequent proteasomal degradation of target proteins. The sequence is that of Suppressor of cytokine signaling 1 (SOCS1) from Homo sapiens (Human).